The sequence spans 160 residues: Cytochrome b6-f complex subunit 4 (160 aa).

3 helical membrane passes run 36–56 (LLYM…GLAV), 95–115 (LLGV…PFIE), and 131–151 (TIFL…TLPI).

The protein belongs to the cytochrome b family. PetD subfamily. The 4 large subunits of the cytochrome b6-f complex are cytochrome b6, subunit IV (17 kDa polypeptide, petD), cytochrome f and the Rieske protein, while the 4 small subunits are petG, petL, petM and petN. The complex functions as a dimer.

Its subcellular location is the plastid. It is found in the chloroplast thylakoid membrane. Its function is as follows. Component of the cytochrome b6-f complex, which mediates electron transfer between photosystem II (PSII) and photosystem I (PSI), cyclic electron flow around PSI, and state transitions. This chain is Cytochrome b6-f complex subunit 4, found in Staurastrum punctulatum (Green alga).